The primary structure comprises 349 residues: MTVEQTPENPGTAARAAAEETVNDILQGAWKARAIHVAVELGVPELLQEGPRTATALAEATGAHEQTLRRLLRLLATVGVFDDLGHDDLFAQNALSAVLLPDPASPVATDARFQAAPWHWRAWEQLTHSVRTGEASFDVANGTSFWQLTHEDPKARELFNRAMGSVSLTEAGQVAAAYDFSGAATAVDIGGGRGSLMAAVLDAFPGLRGTLLERPPVAEEARELLTGRGLADRCEILPGDFFETIPDGADVYLIKHVLHDWDDDDVVRILRRIATAMKPDSRLLVIDNLIDERPAASTLFVDLLLLVLVGGAERSESEFAALLEKSGLRVERSLPCGAGPVRIVEIRRA.

Residues Ser167, Gly190, 213–214 (ER), 240–241 (DF), and Lys255 each bind S-adenosyl-L-methionine. The active-site Proton acceptor is His259. Residue Asn288 participates in substrate binding.

It belongs to the class I-like SAM-binding methyltransferase superfamily. Cation-independent O-methyltransferase family. COMT subfamily. In terms of assembly, homodimer.

It catalyses the reaction 6-demethylmitomycin A + S-adenosyl-L-methionine = mitomycin A + S-adenosyl-L-homocysteine. It carries out the reaction 6-demethylmitomycin B + S-adenosyl-L-methionine = mitomycin B + S-adenosyl-L-homocysteine. With respect to regulation, completely inhibited by Zn(2+) and Cu(2+). In terms of biological role, involved in the biosynthesis of the quinone methoxy group present in the mitomycin A and B, which are used as anticancer agents. In vitro, catalyzes the 6-O-methylation of both C9-beta- and C9-alpha-configured 6-hydroxymitomycins via the transfer of the S-methyl group of S-adenosyl-L-methionine (AdoMet) to the 6-demethylmitomycin A and B. It can also use hydroxyquinone as substrate. The polypeptide is Mitomycin biosynthesis 6-O-methyltransferase (Streptomyces lavendulae).